The chain runs to 458 residues: Glutamyl-tRNA reductase (458 aa).

Substrate contacts are provided by residues 49 to 52 (TCNR), Ser-109, 114 to 116 (EQQ), and Gln-120. Cys-50 functions as the Nucleophile in the catalytic mechanism. 191–196 (GAGAMA) contacts NADP(+).

Belongs to the glutamyl-tRNA reductase family. As to quaternary structure, homodimer.

The enzyme catalyses (S)-4-amino-5-oxopentanoate + tRNA(Glu) + NADP(+) = L-glutamyl-tRNA(Glu) + NADPH + H(+). It participates in porphyrin-containing compound metabolism; protoporphyrin-IX biosynthesis; 5-aminolevulinate from L-glutamyl-tRNA(Glu): step 1/2. Its function is as follows. Catalyzes the NADPH-dependent reduction of glutamyl-tRNA(Glu) to glutamate 1-semialdehyde (GSA). In Corynebacterium aurimucosum (strain ATCC 700975 / DSM 44827 / CIP 107346 / CN-1) (Corynebacterium nigricans), this protein is Glutamyl-tRNA reductase.